Reading from the N-terminus, the 139-residue chain is Metallothiol transferase FosB (139 aa).

Residues 4–119 (GINHITYSVS…DGHKLELHTG (116 aa)) form the VOC domain. Mg(2+) is bound by residues histidine 7, histidine 66, and glutamate 115. Glutamate 115 functions as the Proton donor/acceptor in the catalytic mechanism.

Belongs to the fosfomycin resistance protein family. FosB subfamily. In terms of assembly, homodimer. Requires Mg(2+) as cofactor.

It localises to the cytoplasm. In terms of biological role, metallothiol transferase which confers resistance to fosfomycin by catalyzing the addition of a thiol cofactor to fosfomycin. L-cysteine is probably the physiological thiol donor. The protein is Metallothiol transferase FosB of Staphylococcus haemolyticus.